Reading from the N-terminus, the 201-residue chain is Large ribosomal subunit protein bL25 (201 aa).

The disordered stretch occupies residues 181–201 (APRESEEEAEEEATETAKESE). Residues 185–194 (SEEEAEEEAT) show a composition bias toward acidic residues.

It belongs to the bacterial ribosomal protein bL25 family. CTC subfamily. Part of the 50S ribosomal subunit; part of the 5S rRNA/L5/L18/L25 subcomplex. Contacts the 5S rRNA. Binds to the 5S rRNA independently of L5 and L18.

Functionally, this is one of the proteins that binds to the 5S RNA in the ribosome where it forms part of the central protuberance. This Thermoanaerobacter pseudethanolicus (strain ATCC 33223 / 39E) (Clostridium thermohydrosulfuricum) protein is Large ribosomal subunit protein bL25.